The primary structure comprises 258 residues: Phosphate import ATP-binding protein PstB (258 aa).

One can recognise an ABC transporter domain in the interval 5-253 (LDLNDVNIYY…PTKKETEDYI (249 aa)). 37–44 (GPSGCGKS) lines the ATP pocket.

The protein belongs to the ABC transporter superfamily. Phosphate importer (TC 3.A.1.7) family. As to quaternary structure, the complex is composed of two ATP-binding proteins (PstB), two transmembrane proteins (PstC and PstA) and a solute-binding protein (PstS).

The protein localises to the cell membrane. The enzyme catalyses phosphate(out) + ATP + H2O = ADP + 2 phosphate(in) + H(+). Its function is as follows. Part of the ABC transporter complex PstSACB involved in phosphate import. Responsible for energy coupling to the transport system. This Corynebacterium jeikeium (strain K411) protein is Phosphate import ATP-binding protein PstB.